We begin with the raw amino-acid sequence, 70 residues long: Drosomycin (70 aa).

A signal peptide spans 1 to 20 (MMQIKYLFALFAVLMLVVLG). The propeptide occupies 21-26 (ANEADA). Cystine bridges form between Cys-28–Cys-70, Cys-37–Cys-59, Cys-45–Cys-65, and Cys-49–Cys-67. An N-linked (GlcNAc...) asparagine glycan is attached at Asn-42.

As to expression, hemolymph (at protein level). Synthesized in the fat body and is secreted into the blood. In larvae, expressed in the visceral branches and posterior spiracles of the trachea.

Its subcellular location is the secreted. Possesses antifungal activity and is active against a relatively broad spectrum of filamentous fungi. It inhibits spore germination at high concentrations and at low concentrations delays growth of hyphae which subsequently exhibit abnormal morphology. Spz C-106 in the hemolymph controls expression of the antifungal peptide by acting as a ligand of Tl and inducing an intracellular signaling pathway. Part of a psh-dependent Toll pathway, which may function in activating the systematic immune response in response to localized melanization of the tracheal system. The polypeptide is Drosomycin (Drs) (Drosophila melanogaster (Fruit fly)).